The sequence spans 468 residues: ATP synthase subunit beta (468 aa).

155–162 (GGAGVGKT) serves as a coordination point for ATP.

It belongs to the ATPase alpha/beta chains family. In terms of assembly, F-type ATPases have 2 components, CF(1) - the catalytic core - and CF(0) - the membrane proton channel. CF(1) has five subunits: alpha(3), beta(3), gamma(1), delta(1), epsilon(1). CF(0) has three main subunits: a(1), b(2) and c(9-12). The alpha and beta chains form an alternating ring which encloses part of the gamma chain. CF(1) is attached to CF(0) by a central stalk formed by the gamma and epsilon chains, while a peripheral stalk is formed by the delta and b chains.

The protein localises to the cell inner membrane. It catalyses the reaction ATP + H2O + 4 H(+)(in) = ADP + phosphate + 5 H(+)(out). Functionally, produces ATP from ADP in the presence of a proton gradient across the membrane. The catalytic sites are hosted primarily by the beta subunits. The chain is ATP synthase subunit beta from Bdellovibrio bacteriovorus (strain ATCC 15356 / DSM 50701 / NCIMB 9529 / HD100).